A 144-amino-acid polypeptide reads, in one-letter code: Small ribosomal subunit protein uS11c (144 aa).

The protein belongs to the universal ribosomal protein uS11 family. In terms of assembly, part of the 30S ribosomal subunit.

The protein resides in the plastid. The protein localises to the chloroplast. The protein is Small ribosomal subunit protein uS11c of Oenothera biennis (German evening primrose).